The sequence spans 584 residues: Beta-(1--&gt;2)glucan export ATP-binding/permease protein NdvA (584 aa).

Residues 21 to 301 (VSLVVAANII…MRQFSTQIFE (281 aa)) form the ABC transmembrane type-1 domain. 6 consecutive transmembrane segments (helical) span residues 29–49 (IILA…IDAI), 57–77 (DILF…VLVA), 136–156 (THLA…SMDV), 158–178 (LTLV…MVMD), 248–268 (IAST…VQSG), and 272–292 (VGDV…LDQM). The ABC transporter domain occupies 335–569 (VEFRHVSFDF…GGRFAALLHT (235 aa)). 368 to 375 (GPTGAGKT) provides a ligand contact to ATP.

This sequence belongs to the ABC transporter superfamily. Beta-(1--&gt;2)glucan exporter (TC 3.A.1.108.1) family. Homodimer.

It localises to the cell inner membrane. It carries out the reaction [(1-&gt;2)-beta-D-glucosyl](n)(in) + ATP + H2O = [(1-&gt;2)-beta-D-glucosyl](n)(out) + ADP + phosphate + H(+). Functionally, involved in beta-(1--&gt;2)glucan export. Transmembrane domains (TMD) form a pore in the inner membrane and the ATP-binding domain (NBD) is responsible for energy generation. This is Beta-(1--&gt;2)glucan export ATP-binding/permease protein NdvA from Agrobacterium vitis (Rhizobium vitis).